Consider the following 288-residue polypeptide: MTEGRCAQHPDGLDVQDVCDPDDPRLDDFRDLNSIDRRPDLPTGKALVIAEGVLVVQRMLASRFTPLALFGTDRRLAELKDDLAGVGAPYYRASADVMARVIGFHLNRGVLAAAGRVPEPSVAQVVAGARTVAVLEGVNDHENLGSIFRNAAGLSVDAVVFGTGCADPLYRRAVRVSMGHALLVPYARAADWPTELMTLKESGFRLLAMTPHGNACKLPEAIAAVSHERIALLVGAEGPGLTAAALRISDVRVRIPMSRGTDSLNVATAAALAFYERTRSGHHIGPGT.

A compositionally biased stretch (basic and acidic residues) spans 1–12 (MTEGRCAQHPDG). The segment at 1-20 (MTEGRCAQHPDGLDVQDVCD) is disordered.

This sequence belongs to the class IV-like SAM-binding methyltransferase superfamily. RNA methyltransferase TrmH family.

This is an uncharacterized protein from Mycobacterium tuberculosis (strain ATCC 25618 / H37Rv).